Consider the following 434-residue polypeptide: Transcription factor AP-2-epsilon (434 aa).

Residues 30–123 (LNQGPYSSAP…GLSLDPRRDY (94 aa)) form a disordered region. The segment covering 52-62 (PYFPPPYPQPP) has biased composition (pro residues). The short motif at 53-58 (YFPPPY) is the PPxY motif element. A compositionally biased stretch (polar residues) spans 81–97 (SSINSIHHQHQQPSWHT). The tract at residues 278–408 (RRKAANVTLL…YLLESLKGMD (131 aa)) is H-S-H (helix-span-helix), dimerization. The interval 415-434 (TGNGHSAAESKSEKDIKHRK) is disordered. Residues 422-434 (AESKSEKDIKHRK) are compositionally biased toward basic and acidic residues.

Belongs to the AP-2 family. In terms of assembly, binds DNA as a dimer. Can form homodimers or heterodimers with other AP-2 family members.

The protein resides in the nucleus. In terms of biological role, sequence-specific DNA-binding protein that interacts with inducible viral and cellular enhancer elements to regulate transcription of selected genes. AP-2 factors bind to the consensus sequence 5'-GCCNNNGGC-3' and activate genes involved in a large spectrum of important biological functions. The chain is Transcription factor AP-2-epsilon from Xenopus laevis (African clawed frog).